A 315-amino-acid chain; its full sequence is uncharacterized protein (315 aa).

It belongs to the asfivirus C315R family.

This is an uncharacterized protein from Ornithodoros (relapsing fever ticks).